The primary structure comprises 100 residues: Mini zinc finger protein 2 (100 aa).

Positions 1-26 are disordered; sequence MRKRQVVLRRASPEEPSRSSSTASSL. A ZF-HD dimerization-type; degenerate zinc finger spans residues 33-83; it reads YGECQKNHAAAVGGYAVDGCREFMASRGEEGTVAALTCAACGCHRSFHRRE.

In terms of assembly, homo- and heterodimers. Interacts with ZHD1, ZHD3, ZHD5, ZHD8, ZHD10 and ZHD13. As to expression, mostly expressed in stems, flowers and siliques, and, to a lower extent, in inflorescence.

It is found in the cytoplasm. Its function is as follows. Inhibits zinc finger homeodomain (ZHD) transcription factors by interacting with them to prevent both their nuclear localization and their DNA-binding properties. Involved in integrating signals from multiple hormones by regulating the expression of specific genes. This is Mini zinc finger protein 2 (MIF2) from Arabidopsis thaliana (Mouse-ear cress).